A 206-amino-acid polypeptide reads, in one-letter code: Large ribosomal subunit protein uL4 (206 aa).

It belongs to the universal ribosomal protein uL4 family. As to quaternary structure, part of the 50S ribosomal subunit.

Functionally, one of the primary rRNA binding proteins, this protein initially binds near the 5'-end of the 23S rRNA. It is important during the early stages of 50S assembly. It makes multiple contacts with different domains of the 23S rRNA in the assembled 50S subunit and ribosome. Its function is as follows. Forms part of the polypeptide exit tunnel. The polypeptide is Large ribosomal subunit protein uL4 (Rhodopseudomonas palustris (strain HaA2)).